The chain runs to 521 residues: Pentatricopeptide repeat-containing protein At4g26680, mitochondrial (521 aa).

A mitochondrion-targeting transit peptide spans 1–38 (MIRISIGVNRRLRYQFSSFAGYSGSENPRLFKTLGAAN). PPR repeat units lie at residues 167 to 201 (TPRVFDSLFKTFAHLKKFRNATDTFMQMKDYGFLP), 202 to 236 (TVESCNAYMSSLLGQGRVDIALRFYREMRRCKISP), 237 to 271 (NPYTLNMVMSGYCRSGKLDKGIELLQDMERLGFRA), 272 to 306 (TDVSYNTLIAGHCEKGLLSSALKLKNMMGKSGLQP), 307 to 341 (NVVTFNTLIHGFCRAMKLQEASKVFGEMKAVNVAP), 342 to 376 (NTVTYNTLINGYSQQGDHEMAFRFYEDMVCNGIQR), 377 to 411 (DILTYNALIFGLCKQAKTRKAAQFVKELDKENLVP), 412 to 446 (NSSTFSALIMGQCVRKNADRGFELYKSMIRSGCHP), 447 to 481 (NEQTFNMLVSAFCRNEDFDGASQVLREMVRRSIPL), and 482 to 516 (DSRTVHQVCNGLKHQGKDQLVKKLLQEMEGKKFLQ).

It belongs to the PPR family. P subfamily.

It is found in the mitochondrion. The sequence is that of Pentatricopeptide repeat-containing protein At4g26680, mitochondrial from Arabidopsis thaliana (Mouse-ear cress).